The sequence spans 173 residues: Photosystem I assembly protein Ycf3 (173 aa).

3 TPR repeats span residues 35–68 (AYIY…EENP), 72–105 (GETL…NPKQ), and 120–153 (GRSA…YPGG).

This sequence belongs to the Ycf3 family.

The protein localises to the cellular thylakoid membrane. Its function is as follows. Essential for the assembly of the photosystem I (PSI) complex. May act as a chaperone-like factor to guide the assembly of the PSI subunits. The chain is Photosystem I assembly protein Ycf3 from Prochlorococcus marinus (strain MIT 9211).